A 457-amino-acid chain; its full sequence is Multidrug resistance protein MdtK (457 aa).

Transmembrane regions (helical) follow at residues 11-31, 53-73, 93-113, 127-147, 160-180, 188-208, 243-263, 276-296, 314-334, 357-377, 387-407, and 418-438; these read LLALAIPVILAQIAQTAMGFV, IWLPAILFGHGLLLALTPVIA, WLAGCVSVLIMFVLWNAGYII, AVGYLRALLWGAPGYLFFQVA, GMVIGFLGLLVNIPVNYIFIY, LGGVGCGVATAAVYWVMFIAM, LPIALALFFEVTLFAVVALLV, IALNFSSLMFVLPMSLAAAVT, AARTGLGVGVCMAVITAIFTV, LMLLAAVYQISDSIQVIGSGI, IFFITFTAYWVLGLPSGYILA, and PAGFWMGFIIGLTSAAIMMML.

The protein belongs to the multi antimicrobial extrusion (MATE) (TC 2.A.66.1) family. MdtK subfamily.

It is found in the cell inner membrane. Multidrug efflux pump that functions probably as a Na(+)/drug antiporter. This chain is Multidrug resistance protein MdtK, found in Citrobacter koseri (strain ATCC BAA-895 / CDC 4225-83 / SGSC4696).